The primary structure comprises 147 residues: Small ribosomal subunit protein uS12 (147 aa).

Belongs to the universal ribosomal protein uS12 family. As to quaternary structure, part of the 30S ribosomal subunit.

Functionally, with S4 and S5 plays an important role in translational accuracy. Located at the interface of the 30S and 50S subunits. The polypeptide is Small ribosomal subunit protein uS12 (Pyrococcus horikoshii (strain ATCC 700860 / DSM 12428 / JCM 9974 / NBRC 100139 / OT-3)).